Consider the following 490-residue polypeptide: Cytochrome P450 2C14 (490 aa).

Cys-435 provides a ligand contact to heme.

This sequence belongs to the cytochrome P450 family. The cofactor is heme.

The protein resides in the endoplasmic reticulum membrane. Its subcellular location is the microsome membrane. It catalyses the reaction an organic molecule + reduced [NADPH--hemoprotein reductase] + O2 = an alcohol + oxidized [NADPH--hemoprotein reductase] + H2O + H(+). Cytochromes P450 are a group of heme-thiolate monooxygenases. In liver microsomes, this enzyme is involved in an NADPH-dependent electron transport pathway. It oxidizes a variety of structurally unrelated compounds, including steroids, fatty acids, and xenobiotics. The sequence is that of Cytochrome P450 2C14 (CYP2C14) from Oryctolagus cuniculus (Rabbit).